We begin with the raw amino-acid sequence, 238 residues long: 3-dehydroquinate dehydratase (238 aa).

Residues 35–37 (ELR) and Arg-70 contribute to the 3-dehydroquinate site. His-133 functions as the Proton donor/acceptor in the catalytic mechanism. Residue Lys-160 is the Schiff-base intermediate with substrate of the active site. Arg-202 and Gln-225 together coordinate 3-dehydroquinate.

This sequence belongs to the type-I 3-dehydroquinase family. In terms of assembly, homodimer.

It catalyses the reaction 3-dehydroquinate = 3-dehydroshikimate + H2O. It participates in metabolic intermediate biosynthesis; chorismate biosynthesis; chorismate from D-erythrose 4-phosphate and phosphoenolpyruvate: step 3/7. Functionally, involved in the third step of the chorismate pathway, which leads to the biosynthesis of aromatic amino acids. Catalyzes the cis-dehydration of 3-dehydroquinate (DHQ) and introduces the first double bond of the aromatic ring to yield 3-dehydroshikimate. The chain is 3-dehydroquinate dehydratase from Staphylococcus aureus (strain MSSA476).